We begin with the raw amino-acid sequence, 184 residues long: Peptide deformylase (184 aa).

C92 and H134 together coordinate Fe cation. Residue E135 is part of the active site. H138 contacts Fe cation.

The protein belongs to the polypeptide deformylase family. Fe(2+) is required as a cofactor.

It catalyses the reaction N-terminal N-formyl-L-methionyl-[peptide] + H2O = N-terminal L-methionyl-[peptide] + formate. Removes the formyl group from the N-terminal Met of newly synthesized proteins. Requires at least a dipeptide for an efficient rate of reaction. N-terminal L-methionine is a prerequisite for activity but the enzyme has broad specificity at other positions. The protein is Peptide deformylase of Psychrobacter arcticus (strain DSM 17307 / VKM B-2377 / 273-4).